We begin with the raw amino-acid sequence, 508 residues long: Cytochrome c-552 (508 aa).

Residues 1–23 (MNKSYKILLTGSVIAIGAMGLMA) form the signal peptide. His-103 lines the heme c pocket. Cys-131, Cys-134, and Lys-135 together coordinate heme. Heme c is bound by residues Cys-169, Cys-172, His-173, Cys-211, Cys-214, and His-215. Residues Glu-217, Tyr-218, Lys-274, and Gln-276 each coordinate Ca(2+). A substrate-binding site is contributed by Tyr-218. Position 277 (His-277) interacts with substrate. Heme c contacts are provided by His-288, Cys-295, Cys-298, His-299, His-313, Cys-326, Cys-329, His-330, and His-405. The disordered stretch occupies residues 485-508 (GRLDPKTLEGMSNKSSWSQTELSQ). The segment covering 494-508 (GMSNKSSWSQTELSQ) has biased composition (polar residues).

Belongs to the cytochrome c-552 family. Requires Ca(2+) as cofactor. The cofactor is heme c.

The protein localises to the periplasm. It carries out the reaction 6 Fe(III)-[cytochrome c] + NH4(+) + 2 H2O = 6 Fe(II)-[cytochrome c] + nitrite + 8 H(+). Its pathway is nitrogen metabolism; nitrate reduction (assimilation). Catalyzes the reduction of nitrite to ammonia, consuming six electrons in the process. The polypeptide is Cytochrome c-552 (Desulfotalea psychrophila (strain LSv54 / DSM 12343)).